The primary structure comprises 184 residues: Luciferin-binding protein (184 aa).

EF-hand domains follow at residues 10–45 (YHLRKMKTRMKRVDVTGDGFISREDYELIAVRIAKI), 46–81 (AKLSAEKAEETRQEFLRVADQLGLAPGVRISVEEAA), 98–133 (MAVIQSLIMYDCIDTDKDGYVSLPEFKAFLQAVGPD), and 134–169 (ITDDKAITCFNTLDFNKNGQISRDEFLVTVNDFLFG). The Ca(2+) site is built by aspartate 111, aspartate 113, aspartate 115, tyrosine 117, glutamate 122, aspartate 147, asparagine 149, asparagine 151, glutamine 153, and glutamate 158.

Its function is as follows. This Ca(2+)-dependent protein binds to luciferin. The luciferin of LBP is capable of reacting with luciferase and O(2) only when calcium is bound. The chain is Luciferin-binding protein from Renilla reniformis (Sea pansy).